Consider the following 445-residue polypeptide: tRNA modification GTPase MnmE (445 aa).

Arginine 20, glutamate 79, and lysine 119 together coordinate (6S)-5-formyl-5,6,7,8-tetrahydrofolate. In terms of domain architecture, TrmE-type G spans 215-371; the sequence is GLKLAIIGPP…ILKNIENIAE (157 aa). Residue asparagine 225 participates in K(+) binding. Residues 225 to 230, 244 to 250, and 269 to 272 each bind GTP; these read NVGKSS, SNIAGTT, and DTAG. Serine 229 contributes to the Mg(2+) binding site. 3 residues coordinate K(+): serine 244, isoleucine 246, and threonine 249. Position 250 (threonine 250) interacts with Mg(2+). Residue lysine 445 participates in (6S)-5-formyl-5,6,7,8-tetrahydrofolate binding.

Belongs to the TRAFAC class TrmE-Era-EngA-EngB-Septin-like GTPase superfamily. TrmE GTPase family. In terms of assembly, homodimer. Heterotetramer of two MnmE and two MnmG subunits. K(+) serves as cofactor.

It is found in the cytoplasm. In terms of biological role, exhibits a very high intrinsic GTPase hydrolysis rate. Involved in the addition of a carboxymethylaminomethyl (cmnm) group at the wobble position (U34) of certain tRNAs, forming tRNA-cmnm(5)s(2)U34. In Rickettsia rickettsii (strain Iowa), this protein is tRNA modification GTPase MnmE.